The primary structure comprises 322 residues: Triosephosphate isomerase, chloroplastic (322 aa).

A chloroplast-targeting transit peptide spans 1 to 67 (MAVVSTSLAS…RRCPRGVVAM (67 aa)). Substrate contacts are provided by Asn-78 and Lys-80. Residue His-162 is the Electrophile of the active site. The Proton acceptor role is filled by Glu-232.

The protein belongs to the triosephosphate isomerase family. As to quaternary structure, homodimer.

Its subcellular location is the plastid. It is found in the chloroplast. The catalysed reaction is D-glyceraldehyde 3-phosphate = dihydroxyacetone phosphate. It participates in carbohydrate biosynthesis; Calvin cycle. This Spinacia oleracea (Spinach) protein is Triosephosphate isomerase, chloroplastic (TPIP1).